The following is a 359-amino-acid chain: N6-succino-2-amino-2'-deoxyadenylate synthase (359 aa).

Ser23 functions as the Proton acceptor in the catalytic mechanism. Ser23, Thr24, Gly25, Lys26, and Gly27 together coordinate ATP. A dGMP-binding site is contributed by Ser23. Ser23 serves as a coordination point for Mg(2+). Residue Asn49 participates in dGMP binding. ATP contacts are provided by Gly51, His52, and Thr53. A Mg(2+)-binding site is contributed by Gly51. Ser131, Thr132, and Arg146 together coordinate dGMP. Residue Gln190 participates in ATP binding. Thr205 provides a ligand contact to dGMP. Residue Thr274 participates in Mg(2+) binding. Residues Thr274, Val275, and Arg280 each contribute to the L-aspartate site. ATP-binding residues include Asn305 and Gln308.

Belongs to the Caudovirales PurZ family. It depends on Mg(2+) as a cofactor.

The catalysed reaction is dGMP + L-aspartate + ATP = (2S)-2-amino-2'-deoxyadenylo-succinate + ADP + phosphate + 2 H(+). It functions in the pathway purine metabolism. Functionally, involved in the synthesis of the atypical nucleotide dZTP (2-amino-2'-deoxyadenosine-5'-triphosphate). Catalyzes the condensation of aspartate with deoxyguanylate into dSMP (N6-succino-2-amino-2'-deoxyadenylate), which undergoes defumarylation and phosphorylation respectively by host PurB and guanylate/nucleoside diphosphate kinases to give dZTP. dZTP is integrated into the viral genome instead of adenine by the viral DNA polymerase. This Z-base probably completely replaces adenosine and forms a triple bond to the opposite T-base. The resulting non-standard viral DNA is called Z-genome. The chemically modified DNA is probably harder for the host bacteria to digest with nucleases or restriction enzymes. This is N6-succino-2-amino-2'-deoxyadenylate synthase from Cyanophage S-2L (Cyanobacteria phage S-2L).